Here is a 247-residue protein sequence, read N- to C-terminus: MMERAEDLRLSLSLSSPLIAPRTHHVAMLFHAPPEKRFLEMPLLPAAKRSEVVAAEEERAGLRGGGGSDEEDGGCGIDGSRKKLRLSKDQSAVLEDSFREHPTLNPRQKATLAQQLGLRPRQVEVWFQNRRARTKLKQTEVDCEFLKRCCETLTEENRRLQKEVQELRALKLVSPHLYMNMSPPTTLTMCPSCERVSNTNNNSSAAAAADRRGIRTTTAAAGGSVVDTAADGGILCHRPIAVRPQQS.

Residues 58–81 (ERAGLRGGGGSDEEDGGCGIDGSR) are disordered. Residues 79-138 (GSRKKLRLSKDQSAVLEDSFREHPTLNPRQKATLAQQLGLRPRQVEVWFQNRRARTKLKQ) constitute a DNA-binding region (homeobox). Residues 137–182 (KQTEVDCEFLKRCCETLTEENRRLQKEVQELRALKLVSPHLYMNMS) are leucine-zipper.

Belongs to the HD-ZIP homeobox family. Class II subfamily. As to expression, expressed in seedlings, roots, stems, leaf sheaths and blades and panicles.

Its subcellular location is the nucleus. Probable transcription factor. The protein is Homeobox-leucine zipper protein HOX17 (HOX17) of Oryza sativa subsp. indica (Rice).